A 138-amino-acid chain; its full sequence is Large ribosomal subunit protein uL16 (138 aa).

Belongs to the universal ribosomal protein uL16 family. Part of the 50S ribosomal subunit.

Its function is as follows. Binds 23S rRNA and is also seen to make contacts with the A and possibly P site tRNAs. The chain is Large ribosomal subunit protein uL16 from Rubrobacter xylanophilus (strain DSM 9941 / JCM 11954 / NBRC 16129 / PRD-1).